The chain runs to 194 residues: Putative 3-methyladenine DNA glycosylase (194 aa).

The protein belongs to the DNA glycosylase MPG family.

The chain is Putative 3-methyladenine DNA glycosylase from Mycolicibacterium fortuitum (Mycobacterium fortuitum).